The chain runs to 350 residues: 8-amino-7-oxononanoate synthase (350 aa).

77 to 78 contacts pyridoxal 5'-phosphate; the sequence is GY. His102 serves as a coordination point for substrate. Pyridoxal 5'-phosphate-binding positions include Ser150, 175 to 178, and 204 to 207; these read DDAH and TLSK. Lys207 is modified (N6-(pyridoxal phosphate)lysine). Residue Thr316 coordinates substrate.

It belongs to the class-II pyridoxal-phosphate-dependent aminotransferase family. BioF subfamily. In terms of assembly, homodimer. Requires pyridoxal 5'-phosphate as cofactor.

The catalysed reaction is 6-carboxyhexanoyl-[ACP] + L-alanine + H(+) = (8S)-8-amino-7-oxononanoate + holo-[ACP] + CO2. Its pathway is cofactor biosynthesis; biotin biosynthesis. In terms of biological role, catalyzes the decarboxylative condensation of pimeloyl-[acyl-carrier protein] and L-alanine to produce 8-amino-7-oxononanoate (AON), [acyl-carrier protein], and carbon dioxide. This chain is 8-amino-7-oxononanoate synthase, found in Methylocella silvestris (strain DSM 15510 / CIP 108128 / LMG 27833 / NCIMB 13906 / BL2).